A 608-amino-acid polypeptide reads, in one-letter code: Histone-arginine methyltransferase CARM1 (608 aa).

At A2 the chain carries N-acetylalanine. Positions 27–138 (ATVSVFPGAR…GHTLERSVFS (112 aa)) are interaction with C9orf72. Residues 146-453 (AVQYFQFYGY…KRQSYDISIV (308 aa)) form the SAM-dependent MTase PRMT-type domain. S-adenosyl-L-methionine contacts are provided by Q159, R168, G192, and E214. S216 carries the phosphoserine modification. Residue K227 forms a Glycyl lysine isopeptide (Lys-Gly) (interchain with G-Cter in ubiquitin) linkage. S-adenosyl-L-methionine is bound by residues E243 and S271. Positions 346–379 (RILMAKSVKYTVNFLEAKEGDLHRIEIPFKFHML) are required for nuclear translocation. The segment at 499 to 608 (TGSTYNLSSG…IPTNTMHYGS (110 aa)) is transactivation domain. R550 is subject to Dimethylated arginine.

This sequence belongs to the class I-like SAM-binding methyltransferase superfamily. Protein arginine N-methyltransferase family. Homodimer. Interacts with NR1H4. Interacts with SNRPC. Interacts with the C-terminus of NCOA2/GRIP1, NCO3/ACTR and NCOA1/SRC1. Part of a complex consisting of CARM1, EP300/P300 and NCOA2/GRIP1. Interacts with FLII, TP53, myogenic factor MEF2, EP300/P300, TRIM24, CREBBP and CTNNB1. Interacts with RELA. Identified in a complex containing CARM1, TRIM24 and NCOA2/GRIP1. Interacts with NCOA3/SRC3. Interacts with SKP2. Interacts (via PH domain-like fold) with C9orf72. Interacts with PARP1; promoting PARP1 recruimtent to replication forks. In terms of assembly, (Microbial infection) Interacts with HTLV-1 protein Tax. In terms of processing, auto-methylated on Arg-550. Methylation enhances transcription coactivator activity. Methylation is required for its role in the regulation of pre-mRNA alternative splicing. Post-translationally, phosphorylation at Ser-216 is strongly increased during mitosis, and decreases rapidly to a very low, basal level after entry into the G1 phase of the cell cycle. Phosphorylation at Ser-216 may promote location in the cytosol. Phosphorylation at Ser-216 interferes with S-adenosyl-L-methionine binding and strongly reduces methyltransferase activity. Ubiquitinated by E3 ubiquitin-protein ligase complex containing FBXO9 at Lys-227; leading to proteasomal degradation. In terms of tissue distribution, overexpressed in prostate adenocarcinomas and high-grade prostatic intraepithelial neoplasia.

Its subcellular location is the nucleus. It localises to the cytoplasm. The protein resides in the chromosome. The catalysed reaction is L-arginyl-[protein] + 2 S-adenosyl-L-methionine = N(omega),N(omega)-dimethyl-L-arginyl-[protein] + 2 S-adenosyl-L-homocysteine + 2 H(+). Its activity is regulated as follows. Methylation of H3R17 (H3R17me) by CARM1 is stimulated by preacetylation of H3 'Lys-18' (H3K18ac) H3 'Lys-23' (H3K23ac) by EP300 and blocked by citrullination of H3 'Arg-17' (H3R17ci) by PADI4. Methylates (mono- and asymmetric dimethylation) the guanidino nitrogens of arginyl residues in several proteins involved in DNA packaging, transcription regulation, pre-mRNA splicing, and mRNA stability. Recruited to promoters upon gene activation together with histone acetyltransferases from EP300/P300 and p160 families, methylates histone H3 at 'Arg-17' (H3R17me), forming mainly asymmetric dimethylarginine (H3R17me2a), leading to activation of transcription via chromatin remodeling. During nuclear hormone receptor activation and TCF7L2/TCF4 activation, acts synergically with EP300/P300 and either one of the p160 histone acetyltransferases NCOA1/SRC1, NCOA2/GRIP1 and NCOA3/ACTR or CTNNB1/beta-catenin to activate transcription. During myogenic transcriptional activation, acts together with NCOA3/ACTR as a coactivator for MEF2C. During monocyte inflammatory stimulation, acts together with EP300/P300 as a coactivator for NF-kappa-B. Acts as a coactivator for PPARG, promotes adipocyte differentiation and the accumulation of brown fat tissue. Plays a role in the regulation of pre-mRNA alternative splicing by methylation of splicing factors. Also seems to be involved in p53/TP53 transcriptional activation. Methylates EP300/P300, both at 'Arg-2142', which may loosen its interaction with NCOA2/GRIP1, and at 'Arg-580' and 'Arg-604' in the KIX domain, which impairs its interaction with CREB and inhibits CREB-dependent transcriptional activation. Also methylates arginine residues in RNA-binding proteins PABPC1, ELAVL1 and ELAV4, which may affect their mRNA-stabilizing properties and the half-life of their target mRNAs. Acts as a transcriptional coactivator of ACACA/acetyl-CoA carboxylase by enriching H3R17 methylation at its promoter, thereby positively regulating fatty acid synthesis. Independently of its methyltransferase activity, involved in replication fork progression: promotes PARP1 recruitment to replication forks, leading to poly-ADP-ribosylation of chromatin at replication forks and reduced fork speed. The sequence is that of Histone-arginine methyltransferase CARM1 (CARM1) from Homo sapiens (Human).